Here is a 312-residue protein sequence, read N- to C-terminus: Light-independent protochlorophyllide reductase iron-sulfur ATP-binding protein (312 aa).

Residues 55–60 and Lys84 contribute to the ATP site; that span reads GIGKST. Position 59 (Ser59) interacts with Mg(2+). [4Fe-4S] cluster-binding residues include Cys140 and Cys174. Residues 225–226 and 249–251 contribute to the ATP site; these read NR and PDL.

This sequence belongs to the NifH/BchL/ChlL family. Homodimer. Protochlorophyllide reductase is composed of three subunits; BchL, BchN and BchB. [4Fe-4S] cluster is required as a cofactor.

It catalyses the reaction chlorophyllide a + oxidized 2[4Fe-4S]-[ferredoxin] + 2 ADP + 2 phosphate = protochlorophyllide a + reduced 2[4Fe-4S]-[ferredoxin] + 2 ATP + 2 H2O. The protein operates within porphyrin-containing compound metabolism; bacteriochlorophyll biosynthesis (light-independent). Component of the dark-operative protochlorophyllide reductase (DPOR) that uses Mg-ATP and reduced ferredoxin to reduce ring D of protochlorophyllide (Pchlide) to form chlorophyllide a (Chlide). This reaction is light-independent. The L component serves as a unique electron donor to the NB-component of the complex, and binds Mg-ATP. This Rhodopseudomonas palustris (strain ATCC BAA-98 / CGA009) protein is Light-independent protochlorophyllide reductase iron-sulfur ATP-binding protein.